Here is a 475-residue protein sequence, read N- to C-terminus: Splicing factor U2AF 65 kDa subunit (475 aa).

Positions 1 to 90 are disordered; sequence MSDFDEFERQ…RHEKKKKVRK (90 aa). Ser2 is modified (N-acetylserine). Ser2 carries the phosphoserine modification. Residues 2-93 form a required for interaction with PRPF19 region; that stretch reads SDFDEFERQL…KKKKVRKYWD (92 aa). A compositionally biased stretch (basic and acidic residues) spans 7-22; sequence FERQLNENKQERDKEN. Lys15 is modified (5-hydroxylysine; by JMJD6; alternate). Lys15 participates in a covalent cross-link: Glycyl lysine isopeptide (Lys-Gly) (interchain with G-Cter in SUMO2); alternate. A necessary and sufficient to stimulate pre-mRNAs 3'-end cleavage in a CFIm complex-dependent manner region spans residues 17–47; that stretch reads ERDKENRHRKRSHSRSRSRDRKRRSRSRDRR. Positions 23-46 are enriched in basic residues; that stretch reads RHRKRSHSRSRSRDRKRRSRSRDR. A compositionally biased stretch (basic and acidic residues) spans 47 to 56; it reads RNRDQRSASR. Residue Lys70 forms a Glycyl lysine isopeptide (Lys-Gly) (interchain with G-Cter in SUMO2); alternate linkage. At Lys70 the chain carries N6-acetyllysine; alternate. Ser79 bears the Phosphoserine mark. A compositionally biased stretch (basic residues) spans 79-89; that stretch reads SPRHEKKKKVR. RRM domains follow at residues 149–231, 259–337, and 385–466; these read RRLY…RPHD, HKLF…RASV, and LPEE…YCDP. Residue Lys276 is modified to 5-hydroxylysine; by JMJD6. Ser294 is subject to Phosphoserine.

The protein belongs to the splicing factor SR family. In terms of assembly, interacts with U2AF1L4. Heterodimer with U2AF1. Binds unphosphorylated SF1. Interacts with SCAF11 and SNW1. Interacts with ZRSR2/U2AF1-RS2. Interacts with RBM17. Interacts with PRPF19; the interaction is direct. Interacts with POLR2A (via the C-terminal domain); recruits PRPF19 and the Prp19 complex to the pre-mRNA. Interacts with KHDC4 (Isoform 2). Interacts with ZRSR2. Interacts with the SF3B complex composed of SF3B1, SF3B2, SF3B3, SF3B4, SF3B5, SF3B6 and PHF5A. Interacts (via N-terminus) with CPSF7 (via C-terminus); this interaction stimulates pre-mRNA 3'-end processing by promoting the recruitment of the CFIm complex to cleavage and polyadenylation signals. Interacts with ARGLU1; interaction may be involved in ARGLU1-mediated modulation of alternative splicing. Post-translationally, lysyl-hydroxylation at Lys-15 and Lys-276 affects the mRNA splicing activity of the protein, leading to regulate some, but not all, alternative splicing events.

The protein localises to the nucleus. Its function is as follows. Plays a role in pre-mRNA splicing and 3'-end processing. By recruiting PRPF19 and the PRP19C/Prp19 complex/NTC/Nineteen complex to the RNA polymerase II C-terminal domain (CTD), and thereby pre-mRNA, may couple transcription to splicing. Induces cardiac troponin-T (TNNT2) pre-mRNA exon inclusion in muscle. Regulates the TNNT2 exon 5 inclusion through competition with MBNL1. Binds preferentially to a single-stranded structure within the polypyrimidine tract of TNNT2 intron 4 during spliceosome assembly. Required for the export of mRNA out of the nucleus, even if the mRNA is encoded by an intron-less gene. Represses the splicing of MAPT/Tau exon 10. Positively regulates pre-mRNA 3'-end processing by recruiting the CFIm complex to cleavage and polyadenylation signals. The polypeptide is Splicing factor U2AF 65 kDa subunit (U2AF2) (Homo sapiens (Human)).